A 305-amino-acid chain; its full sequence is Sulfate adenylyltransferase subunit 2 (305 aa).

The protein belongs to the PAPS reductase family. CysD subfamily. Heterodimer composed of CysD, the smaller subunit, and CysN.

The catalysed reaction is sulfate + ATP + H(+) = adenosine 5'-phosphosulfate + diphosphate. The protein operates within sulfur metabolism; hydrogen sulfide biosynthesis; sulfite from sulfate: step 1/3. In terms of biological role, with CysN forms the ATP sulfurylase (ATPS) that catalyzes the adenylation of sulfate producing adenosine 5'-phosphosulfate (APS) and diphosphate, the first enzymatic step in sulfur assimilation pathway. APS synthesis involves the formation of a high-energy phosphoric-sulfuric acid anhydride bond driven by GTP hydrolysis by CysN coupled to ATP hydrolysis by CysD. This Pseudomonas aeruginosa (strain LESB58) protein is Sulfate adenylyltransferase subunit 2.